Consider the following 326-residue polypeptide: Phospho-N-acetylmuramoyl-pentapeptide-transferase (326 aa).

10 consecutive transmembrane segments (helical) span residues 13–33, 57–77, 85–105, 121–141, 155–175, 181–201, 208–228, 232–252, 257–277, and 305–325; these read ILAPLIMGFLFSIVLGPIFIP, GTPTMGGLIFFIATATAILIM, EMILLYSFLAFGFIGFLDDIL, MILLVLFSVALAWYGYTNVGT, NLGILYIPFIVVYYAAVTNAV, IDGLATSVTVIVLTFFAIIGF, VAVFAIALAGALLGFLKFNAF, IFMGDTGSLALGGVIGTIALM, LFVIIVGGIYLIETLSVIIQV, and VKIVTIFSSITAILCIIGFVA.

The protein belongs to the glycosyltransferase 4 family. MraY subfamily. It depends on Mg(2+) as a cofactor.

Its subcellular location is the cell membrane. It carries out the reaction UDP-N-acetyl-alpha-D-muramoyl-L-alanyl-gamma-D-glutamyl-meso-2,6-diaminopimeloyl-D-alanyl-D-alanine + di-trans,octa-cis-undecaprenyl phosphate = di-trans,octa-cis-undecaprenyl diphospho-N-acetyl-alpha-D-muramoyl-L-alanyl-D-glutamyl-meso-2,6-diaminopimeloyl-D-alanyl-D-alanine + UMP. Its pathway is cell wall biogenesis; peptidoglycan biosynthesis. Its function is as follows. Catalyzes the initial step of the lipid cycle reactions in the biosynthesis of the cell wall peptidoglycan: transfers peptidoglycan precursor phospho-MurNAc-pentapeptide from UDP-MurNAc-pentapeptide onto the lipid carrier undecaprenyl phosphate, yielding undecaprenyl-pyrophosphoryl-MurNAc-pentapeptide, known as lipid I. In Clostridium beijerinckii (strain ATCC 51743 / NCIMB 8052) (Clostridium acetobutylicum), this protein is Phospho-N-acetylmuramoyl-pentapeptide-transferase.